The following is a 239-amino-acid chain: tRNA (guanine-N(7)-)-methyltransferase (239 aa).

S-adenosyl-L-methionine-binding residues include Glu-68, Glu-93, Asp-120, and Asp-143. Asp-143 is a catalytic residue. Substrate-binding positions include Lys-147, Asp-180, and Thr-217–Glu-220.

This sequence belongs to the class I-like SAM-binding methyltransferase superfamily. TrmB family.

The enzyme catalyses guanosine(46) in tRNA + S-adenosyl-L-methionine = N(7)-methylguanosine(46) in tRNA + S-adenosyl-L-homocysteine. It functions in the pathway tRNA modification; N(7)-methylguanine-tRNA biosynthesis. Functionally, catalyzes the formation of N(7)-methylguanine at position 46 (m7G46) in tRNA. This chain is tRNA (guanine-N(7)-)-methyltransferase, found in Vibrio cholerae serotype O1 (strain ATCC 39541 / Classical Ogawa 395 / O395).